Reading from the N-terminus, the 428-residue chain is Glutamate-1-semialdehyde 2,1-aminomutase 1 (428 aa).

Residue K267 is modified to N6-(pyridoxal phosphate)lysine.

This sequence belongs to the class-III pyridoxal-phosphate-dependent aminotransferase family. HemL subfamily. As to quaternary structure, homodimer. Requires pyridoxal 5'-phosphate as cofactor.

It localises to the cytoplasm. The catalysed reaction is (S)-4-amino-5-oxopentanoate = 5-aminolevulinate. It participates in porphyrin-containing compound metabolism; protoporphyrin-IX biosynthesis; 5-aminolevulinate from L-glutamyl-tRNA(Glu): step 2/2. The protein is Glutamate-1-semialdehyde 2,1-aminomutase 1 of Staphylococcus aureus (strain Mu3 / ATCC 700698).